The primary structure comprises 196 residues: uncharacterized protein (196 aa).

The protein resides in the mitochondrion. This is an uncharacterized protein from Paramecium tetraurelia.